Reading from the N-terminus, the 819-residue chain is Ion-translocating oxidoreductase complex subunit C (819 aa).

4Fe-4S ferredoxin-type domains are found at residues 368-398 (EYAE…QQLY) and 408-437 (KSEE…IQYF). Residues Cys378, Cys381, Cys384, Cys388, Cys417, Cys420, Cys423, and Cys427 each contribute to the [4Fe-4S] cluster site. Basic and acidic residues-rich tracts occupy residues 465-477 (QARM…ERKA) and 485-513 (ARRE…KANE). Disordered stretches follow at residues 465 to 568 (QARM…NAKK), 580 to 677 (AKKL…TALD), and 692 to 793 (AKKL…PKKA). Polar residues-rich tracts occupy residues 554-565 (VENQEQQTQPTN) and 587-601 (NSTS…TAEN). Residues 602-614 (QVEKTKSAVEKTQ) are compositionally biased toward basic and acidic residues. Over residues 641-656 (QTNSTSEAISNSQTAE) the composition is skewed to polar residues. Residues 658-671 (EVEKTKSAVEKTEE) show a composition bias toward basic and acidic residues. 2 stretches are compositionally biased toward polar residues: residues 699 to 712 (NSAS…QTAE) and 755 to 768 (NSTS…QTAE). The span at 770–782 (EVEKTKSAVEKTQ) shows a compositional bias: basic and acidic residues.

Belongs to the 4Fe4S bacterial-type ferredoxin family. RnfC subfamily. As to quaternary structure, the complex is composed of six subunits: RnfA, RnfB, RnfC, RnfD, RnfE and RnfG. It depends on [4Fe-4S] cluster as a cofactor.

Its subcellular location is the cell inner membrane. Its function is as follows. Part of a membrane-bound complex that couples electron transfer with translocation of ions across the membrane. In Haemophilus influenzae (strain ATCC 51907 / DSM 11121 / KW20 / Rd), this protein is Ion-translocating oxidoreductase complex subunit C.